The primary structure comprises 363 residues: Peroxin-36 (363 aa).

Residues 1–193 are Cytoplasmic-facing; the sequence is MSNLEKQIRL…ESFFINSFEQ (193 aa). Disordered stretches follow at residues 71–114 and 128–157; these read QNHQ…DTST and TNSNESQSKGRPSEYTHVNSPDSGVSSKSG. A compositionally biased stretch (low complexity) spans 97-114; it reads VDSNSDSSSSETLIDTST. The chain crosses the membrane as a helical span at residues 194-213; it reads LIALFDNFYFLSSLIGFNTS. Residues 214–232 lie on the Peroxisomal side of the membrane; the sequence is NSNSKITRLLRNFIKQASK. A helical transmembrane segment spans residues 233 to 250; that stretch reads IWLVIIFLTVKNLFIRMI. Over 251–363 the chain is Cytoplasmic; it reads KLNRTEKKVK…SSDDIIDEYA (113 aa).

It is found in the peroxisome membrane. Functionally, controls peroxisome morphology and abundance under conditions of peroxisome proliferation such as oleate and methanol media. Has additional function(s), which is not present in its functional homologs such as Saccharomyces cerevisea PEX34 or human PEX16. The chain is Peroxin-36 from Komagataella phaffii (strain GS115 / ATCC 20864) (Yeast).